Consider the following 413-residue polypeptide: Tryptophan synthase beta chain 2 (413 aa).

N6-(pyridoxal phosphate)lysine is present on Lys107.

Belongs to the TrpB family. In terms of assembly, tetramer of two alpha and two beta chains. The cofactor is pyridoxal 5'-phosphate.

The enzyme catalyses (1S,2R)-1-C-(indol-3-yl)glycerol 3-phosphate + L-serine = D-glyceraldehyde 3-phosphate + L-tryptophan + H2O. It participates in amino-acid biosynthesis; L-tryptophan biosynthesis; L-tryptophan from chorismate: step 5/5. Functionally, the beta subunit is responsible for the synthesis of L-tryptophan from indole and L-serine. The polypeptide is Tryptophan synthase beta chain 2 (trpB2) (Nostoc sp. (strain PCC 7120 / SAG 25.82 / UTEX 2576)).